We begin with the raw amino-acid sequence, 507 residues long: Probable DNA ligase (507 aa).

Glu-209 is an ATP binding site. Lys-211 (N6-AMP-lysine intermediate) is an active-site residue. Positions 216, 231, 260, 295, 366, and 372 each coordinate ATP.

This sequence belongs to the ATP-dependent DNA ligase family. Mg(2+) is required as a cofactor.

The catalysed reaction is ATP + (deoxyribonucleotide)n-3'-hydroxyl + 5'-phospho-(deoxyribonucleotide)m = (deoxyribonucleotide)n+m + AMP + diphosphate.. Its function is as follows. DNA ligase that seals nicks in double-stranded DNA during DNA replication, DNA recombination and DNA repair. In Pseudarthrobacter chlorophenolicus (strain ATCC 700700 / DSM 12829 / CIP 107037 / JCM 12360 / KCTC 9906 / NCIMB 13794 / A6) (Arthrobacter chlorophenolicus), this protein is Probable DNA ligase.